Here is a 367-residue protein sequence, read N- to C-terminus: Transcription factor aptf-2 (367 aa).

Residues 29–49 (VPATKETGPSSSAECSTQPAV) are disordered. The segment covering 36 to 47 (GPSSSAECSTQP) has biased composition (polar residues). Positions 220–354 (AKQKAFPNKV…GVASELRRLT (135 aa)) are H-S-H (helix-span-helix), dimerization.

This sequence belongs to the AP-2 family. Binds DNA as a dimer.

It localises to the nucleus. Its subcellular location is the cytoplasm. Sequence-specific DNA-binding protein that interacts with enhancer elements to regulate transcription of selected genes. Required for neuroblast and epidermal morphogenesis, perhaps acting in cooperation with transcription factor aptf-4. The sequence is that of Transcription factor aptf-2 from Caenorhabditis elegans.